We begin with the raw amino-acid sequence, 526 residues long: Vang-like protein 2 (526 aa).

Residues 1–95 (MDNESQYSGY…NEDLTRASKE (95 aa)) are disordered. Over 1–109 (MDNESQYSGY…SPLECRRFAG (109 aa)) the chain is Cytoplasmic. Basic residues predominate over residues 15 to 33 (SHSRSSRKHRDRRDRHRSK). Composition is skewed to basic and acidic residues over residues 34–43 (SRDSSSRGDK) and 58–68 (ESTRGDDRDDN). Low complexity predominate over residues 70-83 (GETTTVVTGTSEHS). The span at 84–95 (VSNEDLTRASKE) shows a compositional bias: basic and acidic residues. The chain crosses the membrane as a helical span at residues 110–130 (PIVSGVLGLFALLTPLAFLLL). The Extracellular segment spans residues 131-148 (PQLLWRDSLEPCGTPCEG). Residues 149-169 (LYVSLAFKLLVLLISSWALFL) traverse the membrane as a helical segment. Residues 170-178 (RPSRSTLPR) are Cytoplasmic-facing. A helical transmembrane segment spans residues 179–199 (FFVFRCLLMALVFLFVASYWL). Topologically, residues 200–215 (FYGVRVLEPRERDYRG) are extracellular. A helical transmembrane segment spans residues 216–236 (IVGYAVSLVDALLFIQYLALV). The Cytoplasmic portion of the chain corresponds to 237–526 (LLEVRHLRPA…VMRLQSETSV (290 aa)). Positions 523–526 (ETSV) match the PDZ-binding motif.

It belongs to the Vang family. As to quaternary structure, interacts with the PDZ domain of dvl2/dsh. As to expression, ubiquitously expressed at the 4-cell stage. In early somitogenesis, becomes more abundant in anterior neural tissue where expression is seen in the neural tube but not in the notochord.

Its subcellular location is the cell membrane. Functionally, plays a role in non-canonical Wnt/planar cell polarity (PCP) signaling to regulate convergent extension cell movements during gastrulation. Acts together with scrib and prickle1 and localizes prickle1 and dvl2/dsh to the plasma membrane. Has an overlapping role with kny during both convergent extension and eye development. In the eye, involved in establishing proper alignment of the anterior neural plate and midline cells expressing shha and shhb/twhh. Has indirect effects on a number of other developmental processes including notochord shape formation, neural progenitor cell morphogenesis, segregation of somites and adaxial cell development. Together with prickle1, required for the posterior (caudal) movement of branchiomotor neurons in the hindbrain independently of, and a few hours after, convergent extension. May be required for cell surface localization of fzd3 and fzd6 in the inner ear. This is Vang-like protein 2 from Danio rerio (Zebrafish).